The chain runs to 158 residues: MQGRLSAWLVKHELVHRSLGFDYQGIETLQIKSEDWYSIAVISYVYGYNYLRSQCAYDVAPGGLLASVYHLTRIQYGVDQPEEVCIKVFAQRRNPRIPSVFWIWKSSDFQERESYDMLGIYYDNHPRLKRILMPESWIGWPLRKDYIAPNFYEIQDAH.

It belongs to the complex I 30 kDa subunit family. NDH is composed of at least 16 different subunits, 5 of which are encoded in the nucleus.

It localises to the plastid. The protein localises to the chloroplast thylakoid membrane. The enzyme catalyses a plastoquinone + NADH + (n+1) H(+)(in) = a plastoquinol + NAD(+) + n H(+)(out). The catalysed reaction is a plastoquinone + NADPH + (n+1) H(+)(in) = a plastoquinol + NADP(+) + n H(+)(out). Its function is as follows. NDH shuttles electrons from NAD(P)H:plastoquinone, via FMN and iron-sulfur (Fe-S) centers, to quinones in the photosynthetic chain and possibly in a chloroplast respiratory chain. The immediate electron acceptor for the enzyme in this species is believed to be plastoquinone. Couples the redox reaction to proton translocation, and thus conserves the redox energy in a proton gradient. The chain is NAD(P)H-quinone oxidoreductase subunit J, chloroplastic from Amborella trichopoda.